An 820-amino-acid polypeptide reads, in one-letter code: Serine/threonine-protein phosphatase 4 regulatory subunit 3-A (820 aa).

Positions 1–100 (MSDTRRRVKV…DEIWEKICQV (100 aa)) constitute a WH1 domain. Residues 682–694 (ELWFNEDDEEEGE) are compositionally biased toward acidic residues. Disordered stretches follow at residues 682 to 712 (ELWF…FPEG) and 750 to 820 (AANG…RLGS). The segment covering 701-712 (EKTKPEDDFPEG) has biased composition (basic and acidic residues). Composition is skewed to polar residues over residues 750–761 (AANGANSTNSKS) and 768–790 (PATS…STKG). The span at 798-809 (YPDDEDEEEEED) shows a compositional bias: acidic residues.

Belongs to the SMEK family. Serine/threonine-protein phosphatase 4 (PP4) occurs in different assemblies of the catalytic and one or more regulatory subunits.

Functionally, regulatory subunit of serine/threonine-protein phosphatase 4 (PP4). The polypeptide is Serine/threonine-protein phosphatase 4 regulatory subunit 3-A (Xenopus laevis (African clawed frog)).